A 233-amino-acid chain; its full sequence is MMLEFSEVRLAPNFVDYMQAWEMQQKLHDAVVEGQAPSTVLLLEHAAVYTAGKRTEDHERPFDGTPVIPVDRGGKLTWHGPGQLVGYPIIALADPHAIREYVATLEDILIAVLAQFGIKGERVDGRAGIWLLADAKGPTRKIAAIGIRVHNGVTMHGFSLNCDNDLAPYGQIIACGITDAGATTMELETGRNISPAQVLPHIIKEFSAREATLIGAPAHEAVVPARATEGATQ.

Positions 34 to 214 constitute a BPL/LPL catalytic domain; it reads GQAPSTVLLL…EFSAREATLI (181 aa). Substrate is bound by residues 72 to 79, 144 to 146, and 157 to 159; these read RGGKLTWH, AIG, and GFS. The active-site Acyl-thioester intermediate is Cys-175.

It belongs to the LipB family.

It is found in the cytoplasm. The enzyme catalyses octanoyl-[ACP] + L-lysyl-[protein] = N(6)-octanoyl-L-lysyl-[protein] + holo-[ACP] + H(+). It participates in protein modification; protein lipoylation via endogenous pathway; protein N(6)-(lipoyl)lysine from octanoyl-[acyl-carrier-protein]: step 1/2. Catalyzes the transfer of endogenously produced octanoic acid from octanoyl-acyl-carrier-protein onto the lipoyl domains of lipoate-dependent enzymes. Lipoyl-ACP can also act as a substrate although octanoyl-ACP is likely to be the physiological substrate. The protein is Octanoyltransferase of Renibacterium salmoninarum (strain ATCC 33209 / DSM 20767 / JCM 11484 / NBRC 15589 / NCIMB 2235).